The chain runs to 238 residues: Purine nucleoside phosphorylase DeoD-type (238 aa).

Histidine 5 lines the a purine D-ribonucleoside pocket. Phosphate-binding positions include glycine 21, arginine 25, arginine 44, and 88 to 91; that span reads RIGS. Residues 180 to 182 and 204 to 205 each bind a purine D-ribonucleoside; these read EME and SD. Catalysis depends on aspartate 205, which acts as the Proton donor.

This sequence belongs to the PNP/UDP phosphorylase family. Homohexamer; trimer of homodimers.

It catalyses the reaction a purine D-ribonucleoside + phosphate = a purine nucleobase + alpha-D-ribose 1-phosphate. The catalysed reaction is a purine 2'-deoxy-D-ribonucleoside + phosphate = a purine nucleobase + 2-deoxy-alpha-D-ribose 1-phosphate. Functionally, catalyzes the reversible phosphorolytic breakdown of the N-glycosidic bond in the beta-(deoxy)ribonucleoside molecules, with the formation of the corresponding free purine bases and pentose-1-phosphate. The sequence is that of Purine nucleoside phosphorylase DeoD-type from Xenorhabdus nematophila (strain ATCC 19061 / DSM 3370 / CCUG 14189 / LMG 1036 / NCIMB 9965 / AN6).